Reading from the N-terminus, the 172-residue chain is Large ribosomal subunit protein uL10 (172 aa).

The protein belongs to the universal ribosomal protein uL10 family. In terms of assembly, part of the ribosomal stalk of the 50S ribosomal subunit. The N-terminus interacts with L11 and the large rRNA to form the base of the stalk. The C-terminus forms an elongated spine to which L12 dimers bind in a sequential fashion forming a multimeric L10(L12)X complex.

Its function is as follows. Forms part of the ribosomal stalk, playing a central role in the interaction of the ribosome with GTP-bound translation factors. This is Large ribosomal subunit protein uL10 from Rhodospirillum rubrum (strain ATCC 11170 / ATH 1.1.1 / DSM 467 / LMG 4362 / NCIMB 8255 / S1).